A 237-amino-acid chain; its full sequence is Small ribosomal subunit protein uS3 (237 aa).

The 69-residue stretch at 39 to 107 (IRAYLMEELK…ETHLNIVEVR (69 aa)) folds into the KH type-2 domain. Positions 213 to 237 (MASERRATESDNQGGGGRDRRRENA) are disordered.

This sequence belongs to the universal ribosomal protein uS3 family. As to quaternary structure, part of the 30S ribosomal subunit. Forms a tight complex with proteins S10 and S14.

In terms of biological role, binds the lower part of the 30S subunit head. Binds mRNA in the 70S ribosome, positioning it for translation. In Sinorhizobium fredii (strain NBRC 101917 / NGR234), this protein is Small ribosomal subunit protein uS3.